Consider the following 218-residue polypeptide: MSDNDELQQIAHLRREYTKGGLRRRDLPADPLTLFERWLSQACEAKLADPTAMVVATVDENGQPYQRIVLLKHYDEKGMVFYTNLGSRKAHQIESNPRVSLLFPWHTLERQVMVTGKAERLSTLEVVKYFHSRPRDSQIGAWVSKQSSRISARGILESKFLELKQKFQQGEVPLPSFWGGFRVSMEQIEFWQGGEHRLHDRFLYQRENDAWKIDRLAP.

Substrate-binding positions include 14–17 (RREY) and Lys-72. Residues 67–72 (RIVLLK), 82–83 (YT), Arg-88, Lys-89, and Gln-111 each bind FMN. The substrate site is built by Tyr-129, Arg-133, and Ser-137. FMN is bound by residues 146–147 (QS) and Trp-191. Position 197–199 (197–199 (RLH)) interacts with substrate. Position 201 (Arg-201) interacts with FMN.

It belongs to the pyridoxamine 5'-phosphate oxidase family. In terms of assembly, homodimer. FMN is required as a cofactor.

The catalysed reaction is pyridoxamine 5'-phosphate + O2 + H2O = pyridoxal 5'-phosphate + H2O2 + NH4(+). The enzyme catalyses pyridoxine 5'-phosphate + O2 = pyridoxal 5'-phosphate + H2O2. Its pathway is cofactor metabolism; pyridoxal 5'-phosphate salvage; pyridoxal 5'-phosphate from pyridoxamine 5'-phosphate: step 1/1. The protein operates within cofactor metabolism; pyridoxal 5'-phosphate salvage; pyridoxal 5'-phosphate from pyridoxine 5'-phosphate: step 1/1. Functionally, catalyzes the oxidation of either pyridoxine 5'-phosphate (PNP) or pyridoxamine 5'-phosphate (PMP) into pyridoxal 5'-phosphate (PLP). The chain is Pyridoxine/pyridoxamine 5'-phosphate oxidase from Escherichia fergusonii (strain ATCC 35469 / DSM 13698 / CCUG 18766 / IAM 14443 / JCM 21226 / LMG 7866 / NBRC 102419 / NCTC 12128 / CDC 0568-73).